Reading from the N-terminus, the 217-residue chain is Putative thymidylate synthase (217 aa).

Cysteine 139 is a catalytic residue.

Belongs to the thymidylate synthase family. Archaeal-type ThyA subfamily. As to quaternary structure, monomer.

Its subcellular location is the cytoplasm. Its pathway is pyrimidine metabolism; dTTP biosynthesis. Functionally, may catalyze the biosynthesis of dTMP using an unknown cosubstrate. The polypeptide is Putative thymidylate synthase (Methanosarcina acetivorans (strain ATCC 35395 / DSM 2834 / JCM 12185 / C2A)).